The chain runs to 221 residues: Zingipain-1 (221 aa).

3 cysteine pairs are disulfide-bonded: Cys-24–Cys-65, Cys-58–Cys-98, and Cys-155–Cys-206. Residue Cys-27 is part of the active site. 2 N-linked (GlcNAc...) asparagine glycosylation sites follow: Asn-95 and Asn-156. Residues His-161 and Asn-181 contribute to the active site.

The protein belongs to the peptidase C1 family.

The enzyme catalyses Preferential cleavage of peptides with a proline residue at the P2 position.. Its function is as follows. Cysteine proteinase with a high level of diversity in substrate specificity, an amino acid bearing a proline residue at the P2 position is preferred. This is Zingipain-1 from Zingiber officinale (Ginger).